A 581-amino-acid polypeptide reads, in one-letter code: Frizzled-8 (581 aa).

The first 23 residues, methionine 1–alanine 23, serve as a signal peptide directing secretion. Residues lysine 24 to tyrosine 144 enclose the FZ domain. At lysine 24–tryptophan 239 the chain is on the extracellular side. Cystine bridges form between cysteine 28-cysteine 89, cysteine 36-cysteine 82, cysteine 73-cysteine 111, cysteine 100-cysteine 141, and cysteine 104-cysteine 128. A glycan (N-linked (GlcNAc...) asparagine) is linked at asparagine 42. Residue glutamine 64–isoleucine 71 coordinates hexadecanoate. The tract at residues isoleucine 88–tyrosine 93 is wnt-binding. A wnt-binding region spans residues leucine 140–asparagine 146. The N-linked (GlcNAc...) asparagine glycan is linked to asparagine 146. Residues threonine 151–serine 189 are disordered. The span at histidine 157 to arginine 166 shows a compositional bias: pro residues. Residues isoleucine 240–isoleucine 260 traverse the membrane as a helical segment. Residues aspartate 261–proline 271 lie on the Cytoplasmic side of the membrane. Residues isoleucine 272 to alanine 292 traverse the membrane as a helical segment. Over glycine 293–cysteine 320 the chain is Extracellular. The chain crosses the membrane as a helical span at residues threonine 321 to leucine 341. Topologically, residues serine 342–serine 377 are cytoplasmic. Residues isoleucine 378–glycine 398 form a helical membrane-spanning segment. The Extracellular portion of the chain corresponds to asparagine 399–glycine 407. A helical membrane pass occupies residues phenylalanine 408–phenylalanine 428. Residues valine 429–arginine 454 are Cytoplasmic-facing. The helical transmembrane segment at isoleucine 455–tyrosine 475 threads the bilayer. The Extracellular portion of the chain corresponds to glutamate 476–alanine 505. A helical membrane pass occupies residues valine 506 to tryptophan 526. At serine 527–valine 581 the chain is on the cytoplasmic side. The short motif at lysine 529 to tryptophan 534 is the Lys-Thr-X-X-X-Trp motif, mediates interaction with the PDZ domain of Dvl family members element. The PDZ-binding signature appears at serine 579–valine 581.

The protein belongs to the G-protein coupled receptor Fz/Smo family. In terms of assembly, interacts with lypd6 and the interaction is strongly enhanced by wnt3a.

The protein resides in the membrane. It is found in the cell membrane. In terms of biological role, receptor for Wnt proteins. Most of frizzled receptors are coupled to the beta-catenin canonical signaling pathway, which leads to the activation of disheveled proteins, inhibition of GSK-3 kinase, nuclear accumulation of beta-catenin and activation of Wnt target genes. A second signaling pathway involving PKC and calcium fluxes has been seen for some family members, but it is not yet clear if it represents a distinct pathway or if it can be integrated in the canonical pathway, as PKC seems to be required for Wnt-mediated inactivation of GSK-3 kinase. Both pathways seem to involve interactions with G-proteins. May be involved in transduction and intercellular transmission of polarity information during tissue morphogenesis and/or in differentiated tissues. Activation by Wnt8, Wnt5A or Wnt3A induces expression of beta-catenin target genes. Displays an axis-inducing activity. The polypeptide is Frizzled-8 (fzd8) (Xenopus laevis (African clawed frog)).